The following is a 272-amino-acid chain: 2-amino-3,7-dideoxy-D-threo-hept-6-ulosonate synthase (272 aa).

The active-site Proton acceptor is Asp33. Residues 33–37 (DHGVS) and 153–155 (YPR) each bind 1-deoxy-D-threo-hexo-2,5-diulose 6-phosphate. Tyr153 (proton donor) is an active-site residue. Catalysis depends on Lys184, which acts as the Schiff-base intermediate with substrate. Residues 209–210 (GG) and 237–238 (GR) contribute to the 1-deoxy-D-threo-hexo-2,5-diulose 6-phosphate site.

It belongs to the DeoC/FbaB aldolase family. ADHS subfamily. In terms of assembly, homodecamer.

The catalysed reaction is 1-deoxy-D-threo-hexo-2,5-diulose 6-phosphate + L-aspartate 4-semialdehyde = 2,3-dioxopropyl phosphate + 2-amino-2,3,7-trideoxy-D-lyxo-hept-6-ulosonate. In terms of biological role, catalyzes a transaldol reaction between 6-deoxy-5-ketofructose 1-phosphate (DKFP) and L-aspartate semialdehyde (ASA) with an elimination of hydroxypyruvaldehyde phosphate to yield 2-amino-3,7-dideoxy-D-threo-hept-6-ulosonate (ADH). Plays a key role in an alternative pathway of the biosynthesis of 3-dehydroquinate (DHQ), which is involved in the canonical pathway for the biosynthesis of aromatic amino acids. The sequence is that of 2-amino-3,7-dideoxy-D-threo-hept-6-ulosonate synthase from Methanococcus maripaludis (strain C7 / ATCC BAA-1331).